A 391-amino-acid polypeptide reads, in one-letter code: GTPase Obg (391 aa).

The Obg domain maps to Met1 to Leu159. The OBG-type G domain occupies Ala160–Glu333. Residues Gly166 to Ser173, Phe191 to Ile195, Asp213 to Gly216, Asn283 to Asp286, and Ser314 to Ile316 contribute to the GTP site. The Mg(2+) site is built by Ser173 and Thr193. Residues Thr367–Asp383 show a composition bias toward acidic residues. The segment at Thr367–Asp391 is disordered.

Belongs to the TRAFAC class OBG-HflX-like GTPase superfamily. OBG GTPase family. As to quaternary structure, monomer. Mg(2+) serves as cofactor.

The protein localises to the cytoplasm. An essential GTPase which binds GTP, GDP and possibly (p)ppGpp with moderate affinity, with high nucleotide exchange rates and a fairly low GTP hydrolysis rate. Plays a role in control of the cell cycle, stress response, ribosome biogenesis and in those bacteria that undergo differentiation, in morphogenesis control. The protein is GTPase Obg of Vibrio campbellii (strain ATCC BAA-1116).